The following is a 549-amino-acid chain: Zinc finger protein 382 (549 aa).

Positions 1–105 (MNCHSVPLQG…DKPPTSIVII (105 aa)) are mediates interaction with TRIM28. Represses transcription regions lie at residues 10–51 (GPVS…FISV) and 75–210 (MFPS…PEQR). One can recognise a KRAB domain in the interval 12 to 83 (VSFKDVTVDF…RMFPSQSYLE (72 aa)). 10 consecutive C2H2-type zinc fingers follow at residues 211 to 233 (FECD…DRAH), 295 to 317 (FQCP…QRIH), 323 to 345 (YICS…EKTH), 351 to 373 (YLCV…HKTH), 379 to 401 (YECT…QRTH), 407 to 429 (YQCA…QRTH), 435 to 457 (YMCS…QRIH), 463 to 485 (YVCS…YRIH), 491 to 513 (NGCP…QKTH), and 519 to 541 (YECH…QKTH). Residues 295 to 549 (FQCPYCGNSF…THKAETVRFQ (255 aa)) are required for transcriptional repression activity; probably mediates sequence-specific DNA-binding.

Belongs to the krueppel C2H2-type zinc-finger protein family. As to quaternary structure, interacts with TRIM28; enhances the transcriptional repressor activity. In terms of tissue distribution, ubiquitously expressed with higher expression in lung, kidney and testis.

The protein localises to the nucleus. Functions as a sequence-specific transcriptional repressor. This Rattus norvegicus (Rat) protein is Zinc finger protein 382 (Znf382).